We begin with the raw amino-acid sequence, 107 residues long: BolA-like protein 3 (107 aa).

Belongs to the BolA/IbaG family. Interacts with NFU1. As to expression, widely expressed.

It is found in the mitochondrion. Acts as a mitochondrial iron-sulfur (Fe-S) cluster assembly factor that facilitates (Fe-S) cluster insertion into a subset of mitochondrial proteins. Probably acts together with NFU1. The protein is BolA-like protein 3 of Homo sapiens (Human).